Consider the following 92-residue polypeptide: Cell division protein FtsB (92 aa).

Topologically, residues 1–3 (MKW) are cytoplasmic. The chain crosses the membrane as a helical span at residues 4 to 21 (VTVVLSFALVCCQYSLWF). Topologically, residues 22–92 (GKGSIGRNSS…TFYRLIRHNR (71 aa)) are periplasmic. Residues 28–50 (RNSSLREQIAVQEEKNQTLALRN) adopt a coiled-coil conformation.

The protein belongs to the FtsB family. In terms of assembly, part of a complex composed of FtsB, FtsL and FtsQ.

The protein localises to the cell inner membrane. Functionally, essential cell division protein. May link together the upstream cell division proteins, which are predominantly cytoplasmic, with the downstream cell division proteins, which are predominantly periplasmic. The polypeptide is Cell division protein FtsB (Neisseria meningitidis serogroup C (strain 053442)).